A 177-amino-acid chain; its full sequence is Large ribosomal subunit protein uL6 (177 aa).

Belongs to the universal ribosomal protein uL6 family. As to quaternary structure, part of the 50S ribosomal subunit.

In terms of biological role, this protein binds to the 23S rRNA, and is important in its secondary structure. It is located near the subunit interface in the base of the L7/L12 stalk, and near the tRNA binding site of the peptidyltransferase center. In Azorhizobium caulinodans (strain ATCC 43989 / DSM 5975 / JCM 20966 / LMG 6465 / NBRC 14845 / NCIMB 13405 / ORS 571), this protein is Large ribosomal subunit protein uL6.